The primary structure comprises 319 residues: Sulfate adenylyltransferase subunit 2 (319 aa).

Disordered stretches follow at residues 1–22 (MNPG…TRRP) and 296–319 (RGAT…EGYF).

This sequence belongs to the PAPS reductase family. CysD subfamily.

The enzyme catalyses sulfate + ATP + H(+) = adenosine 5'-phosphosulfate + diphosphate. The protein operates within antibiotic biosynthesis; mitomycin C biosynthesis. Functionally, with CysN forms the ATP sulfurylase (ATPS) that catalyzes the adenylation of sulfate producing adenosine 5'-phosphosulfate (APS) and diphosphate, the first enzymatic step in sulfur assimilation pathway. APS synthesis involves the formation of a high-energy phosphoric-sulfuric acid anhydride bond driven by GTP hydrolysis by CysN coupled to ATP hydrolysis by CysD. This Streptomyces lavendulae protein is Sulfate adenylyltransferase subunit 2 (mmcV).